A 145-amino-acid polypeptide reads, in one-letter code: Leptin (145 aa).

The signal sequence occupies residues 1-12; the sequence is LWLWPYLFFIEA.

This sequence belongs to the leptin family.

The protein localises to the secreted. Its function is as follows. Key player in the regulation of energy balance and body weight control. Once released into the circulation, has central and peripheral effects by binding LEPR, found in many tissues, which results in the activation of several major signaling pathways. In the hypothalamus, acts as an appetite-regulating factor that induces a decrease in food intake and an increase in energy consumption by inducing anorexinogenic factors and suppressing orexigenic neuropeptides, also regulates bone mass and secretion of hypothalamo-pituitary-adrenal hormones. In the periphery, increases basal metabolism, influences reproductive function, regulates pancreatic beta-cell function and insulin secretion, is pro-angiogenic for endothelial cell and affects innate and adaptive immunity. In the arcuate nucleus of the hypothalamus, activates by depolarization POMC neurons inducing FOS and SOCS3 expression to release anorexigenic peptides and inhibits by hyperpolarization NPY neurons inducing SOCS3 with a consequent reduction on release of orexigenic peptides. In addition to its known satiety inducing effect, has a modulatory role in nutrient absorption. In the intestine, reduces glucose absorption by enterocytes by activating PKC and leading to a sequential activation of p38, PI3K and ERK signaling pathways which exerts an inhibitory effect on glucose absorption. Acts as a growth factor on certain tissues, through the activation of different signaling pathways increases expression of genes involved in cell cycle regulation such as CCND1, via JAK2-STAT3 pathway, or VEGFA, via MAPK1/3 and PI3K-AKT1 pathways. May also play an apoptotic role via JAK2-STAT3 pathway and up-regulation of BIRC5 expression. Pro-angiogenic, has mitogenic activity on vascular endothelial cells and plays a role in matrix remodeling by regulating the expression of matrix metalloproteinases (MMPs) and tissue inhibitors of metalloproteinases (TIMPs). In innate immunity, modulates the activity and function of neutrophils by increasing chemotaxis and the secretion of oxygen radicals. Increases phagocytosis by macrophages and enhances secretion of pro-inflammatory mediators. Increases cytotoxic ability of NK cells. Plays a pro-inflammatory role, in synergy with IL1B, by inducing NOS2 which promotes the production of IL6, IL8 and Prostaglandin E2, through a signaling pathway that involves JAK2, PI3K, MAP2K1/MEK1 and MAPK14/p38. In adaptive immunity, promotes the switch of memory T-cells towards T helper-1 cell immune responses. Increases CD4(+)CD25(-) T-cell proliferation and reduces autophagy during TCR (T-cell receptor) stimulation, through MTOR signaling pathway activation and BCL2 up-regulation. The sequence is that of Leptin (LEP) from Equus caballus (Horse).